Reading from the N-terminus, the 76-residue chain is Putative defensin-like protein 62 (76 aa).

The signal sequence occupies residues 1–26 (MDVTKTYVTIFVVAILTISVLIQIQQ). 4 cysteine pairs are disulfide-bonded: Cys30–Cys71, Cys34–Cys57, Cys43–Cys69, and Cys47–Cys70.

This sequence belongs to the DEFL family.

Its subcellular location is the secreted. In Arabidopsis thaliana (Mouse-ear cress), this protein is Putative defensin-like protein 62.